Here is a 261-residue protein sequence, read N- to C-terminus: Kallikrein 1-related peptidase b8 (261 aa).

An N-terminal signal peptide occupies residues 1-18 (MRFLILFLALSLGGIDAA). Positions 19-24 (PPLQSR) are cleaved as a propeptide — activation peptide. The Peptidase S1 domain maps to 25 to 258 (VVGGFNCEKN…FNSWIKDTMT (234 aa)). Disulfide bonds link Cys31/Cys173, Cys50/Cys66, Cys152/Cys219, Cys184/Cys198, and Cys209/Cys234. Residue His65 is the Charge relay system of the active site. Asn102 is a glycosylation site (N-linked (GlcNAc...) asparagine). Asp120 (charge relay system) is an active-site residue. The active-site Charge relay system is the Ser213.

The protein belongs to the peptidase S1 family. Kallikrein subfamily.

The catalysed reaction is Preferential cleavage of Arg-|-Xaa bonds in small molecule substrates. Highly selective action to release kallidin (lysyl-bradykinin) from kininogen involves hydrolysis of Met-|-Xaa or Leu-|-Xaa.. In terms of biological role, glandular kallikreins cleave Met-Lys and Arg-Ser bonds in kininogen to release Lys-bradykinin. The chain is Kallikrein 1-related peptidase b8 (Klk1b8) from Mus musculus (Mouse).